A 644-amino-acid polypeptide reads, in one-letter code: Macrolide export ATP-binding/permease protein MacB (644 aa).

The region spanning 4–242 (IECKNINRYF…SNVGRIQEKA (239 aa)) is the ABC transporter domain. 40 to 47 (GQSGSGKS) serves as a coordination point for ATP. A run of 4 helical transmembrane segments spans residues 270 to 290 (LLTMLGIIIGIASVVSVVALG), 524 to 544 (IALISLVVGGIGVMNIMLVSV), 574 to 594 (LICVIGGLVGVGLSAAVSLVF), and 607 to 627 (AMSVIGAVACSTGIGIAFGFM).

This sequence belongs to the ABC transporter superfamily. Macrolide exporter (TC 3.A.1.122) family. As to quaternary structure, homodimer.

The protein resides in the cell inner membrane. Its function is as follows. Non-canonical ABC transporter that contains transmembrane domains (TMD), which form a pore in the inner membrane, and an ATP-binding domain (NBD), which is responsible for energy generation. Confers resistance against macrolides. This Neisseria meningitidis serogroup A / serotype 4A (strain DSM 15465 / Z2491) protein is Macrolide export ATP-binding/permease protein MacB.